The following is a 193-amino-acid chain: Ion-translocating oxidoreductase complex subunit A (193 aa).

6 consecutive transmembrane segments (helical) span residues 5–25 (LLLLIGTVLVNNFVLVKFLGL), 39–59 (IGMGLATTFVLTLASVCSYLI), 63–83 (ILAPLGIEYLRTMSFILVIAV), 102–122 (VLGIFLPLITTNCAVLGVALL), 134–154 (IIYGFGAAVGFSLVLILFSAM), and 171–191 (SIAMITAGLMSLAFMGFTGLV).

It belongs to the NqrDE/RnfAE family. As to quaternary structure, the complex is composed of six subunits: RnfA, RnfB, RnfC, RnfD, RnfE and RnfG.

It localises to the cell inner membrane. Part of a membrane-bound complex that couples electron transfer with translocation of ions across the membrane. The sequence is that of Ion-translocating oxidoreductase complex subunit A from Aliivibrio salmonicida (strain LFI1238) (Vibrio salmonicida (strain LFI1238)).